We begin with the raw amino-acid sequence, 155 residues long: Protein-export protein SecB (155 aa).

This sequence belongs to the SecB family. As to quaternary structure, homotetramer, a dimer of dimers. One homotetramer interacts with 1 SecA dimer.

The protein resides in the cytoplasm. Functionally, one of the proteins required for the normal export of preproteins out of the cell cytoplasm. It is a molecular chaperone that binds to a subset of precursor proteins, maintaining them in a translocation-competent state. It also specifically binds to its receptor SecA. The protein is Protein-export protein SecB of Escherichia fergusonii (strain ATCC 35469 / DSM 13698 / CCUG 18766 / IAM 14443 / JCM 21226 / LMG 7866 / NBRC 102419 / NCTC 12128 / CDC 0568-73).